Consider the following 281-residue polypeptide: Elongation factor Ts (281 aa).

An involved in Mg(2+) ion dislocation from EF-Tu region spans residues 79–82 (TDFV).

It belongs to the EF-Ts family.

It is found in the cytoplasm. Functionally, associates with the EF-Tu.GDP complex and induces the exchange of GDP to GTP. It remains bound to the aminoacyl-tRNA.EF-Tu.GTP complex up to the GTP hydrolysis stage on the ribosome. The protein is Elongation factor Ts of Wolbachia pipientis subsp. Culex pipiens (strain wPip).